The chain runs to 277 residues: Endochitinase CHI (277 aa).

A signal peptide spans 1–31; the sequence is MAKPTSRNDRFALFFITLIFLILTVSKPVAS. Residues 32 to 66 form the Chitin-binding type-1 domain; sequence QNCGCASDFCCSKYGYCGTTDEFCGEGCQAGPCRS. 4 disulfide bridges follow: Cys-34-Cys-42, Cys-36-Cys-48, Cys-41-Cys-55, and Cys-59-Cys-64. The tract at residues 75 to 277 is catalytic; it reads VSLEGTVTPD…GVAPGDNLTC (203 aa). Glu-136 serves as the catalytic Proton donor. Asn-274 carries N-linked (GlcNAc...) asparagine glycosylation.

It belongs to the glycosyl hydrolase 19 family. Chitinase class I subfamily.

It carries out the reaction Random endo-hydrolysis of N-acetyl-beta-D-glucosaminide (1-&gt;4)-beta-linkages in chitin and chitodextrins.. The protein is Endochitinase CHI of Arabidopsis thaliana (Mouse-ear cress).